The chain runs to 227 residues: Small ribosomal subunit protein uS3 (227 aa).

The KH type-2 domain occupies 39–108 (IRKFIEERYK…EVIVNVDEVK (70 aa)).

Belongs to the universal ribosomal protein uS3 family. In terms of assembly, part of the 30S ribosomal subunit. Forms a tight complex with proteins S10 and S14.

Functionally, binds the lower part of the 30S subunit head. Binds mRNA in the 70S ribosome, positioning it for translation. In Sulfurihydrogenibium sp. (strain YO3AOP1), this protein is Small ribosomal subunit protein uS3.